Consider the following 77-residue polypeptide: Small ribosomal subunit protein bS20 (77 aa).

This sequence belongs to the bacterial ribosomal protein bS20 family.

Its function is as follows. Binds directly to 16S ribosomal RNA. This chain is Small ribosomal subunit protein bS20, found in Lactococcus lactis subsp. cremoris (strain MG1363).